The following is a 336-amino-acid chain: Glyceraldehyde-3-phosphate dehydrogenase (336 aa).

Residues 12–13, aspartate 34, arginine 78, and threonine 121 each bind NAD(+); that span reads RI. Residues 151–153, threonine 182, arginine 199, 212–213, and arginine 235 contribute to the D-glyceraldehyde 3-phosphate site; these read SCT and TG. Cysteine 152 (nucleophile) is an active-site residue. Asparagine 316 is an NAD(+) binding site.

The protein belongs to the glyceraldehyde-3-phosphate dehydrogenase family. As to quaternary structure, homotetramer.

It is found in the cytoplasm. It catalyses the reaction D-glyceraldehyde 3-phosphate + phosphate + NAD(+) = (2R)-3-phospho-glyceroyl phosphate + NADH + H(+). It functions in the pathway carbohydrate degradation; glycolysis; pyruvate from D-glyceraldehyde 3-phosphate: step 1/5. Its function is as follows. Also binds human plasminogen. In terms of biological role, catalyzes the oxidative phosphorylation of glyceraldehyde 3-phosphate (G3P) to 1,3-bisphosphoglycerate (BPG) using the cofactor NAD. The first reaction step involves the formation of a hemiacetal intermediate between G3P and a cysteine residue, and this hemiacetal intermediate is then oxidized to a thioester, with concomitant reduction of NAD to NADH. The reduced NADH is then exchanged with the second NAD, and the thioester is attacked by a nucleophilic inorganic phosphate to produce BPG. The sequence is that of Glyceraldehyde-3-phosphate dehydrogenase (gap) from Streptococcus pyogenes.